Here is a 470-residue protein sequence, read N- to C-terminus: NADH-quinone oxidoreductase subunit D (470 aa).

The span at 1–18 shows a compositional bias: low complexity; that stretch reads MTPSTSTPHTSTAPHTST. The tract at residues 1–37 is disordered; the sequence is MTPSTSTPHTSTAPHTSTGQSTDGAAQPGDGSSAYEA.

This sequence belongs to the complex I 49 kDa subunit family. NDH-1 is composed of 14 different subunits. Subunits NuoB, C, D, E, F, and G constitute the peripheral sector of the complex.

The protein localises to the cell membrane. The catalysed reaction is a quinone + NADH + 5 H(+)(in) = a quinol + NAD(+) + 4 H(+)(out). Its function is as follows. NDH-1 shuttles electrons from NADH, via FMN and iron-sulfur (Fe-S) centers, to quinones in the respiratory chain. The immediate electron acceptor for the enzyme in this species is believed to be a menaquinone. Couples the redox reaction to proton translocation (for every two electrons transferred, four hydrogen ions are translocated across the cytoplasmic membrane), and thus conserves the redox energy in a proton gradient. This Frankia alni (strain DSM 45986 / CECT 9034 / ACN14a) protein is NADH-quinone oxidoreductase subunit D.